The sequence spans 249 residues: Segregation and condensation protein A (249 aa).

It belongs to the ScpA family. In terms of assembly, component of a cohesin-like complex composed of ScpA, ScpB and the Smc homodimer, in which ScpA and ScpB bind to the head domain of Smc. The presence of the three proteins is required for the association of the complex with DNA.

Its subcellular location is the cytoplasm. Its function is as follows. Participates in chromosomal partition during cell division. May act via the formation of a condensin-like complex containing Smc and ScpB that pull DNA away from mid-cell into both cell halves. This Listeria monocytogenes serotype 4b (strain CLIP80459) protein is Segregation and condensation protein A.